A 1257-amino-acid chain; its full sequence is ATP-binding cassette sub-family B member 5 (1257 aa).

Residues 1 to 24 form a disordered region; sequence MENSERAEEMQENYQRNGTAEEQP. Asn-17 carries an N-linked (GlcNAc...) asparagine glycan. Residues 49-69 form a helical membrane-spanning segment; that stretch reads ILGILASLVNGACLPLMPLVL. An ABC transmembrane type-1 1 domain is found at 49-350; that stretch reads ILGILASLVN…AAVPHFETFA (302 aa). Residues Asn-85 and Asn-91 are each glycosylated (N-linked (GlcNAc...) asparagine). 5 helical membrane passes run 110–130, 181–201, 203–223, 294–314, and 322–342; these read YVGIGVAALIFGYIQISLWII, KIALLFQNMSTFSIGLAVGLV, GWKLTLVTLSTSPLIMASAAA, VYFFMNGTYGLAFWYGTSLIL, and IGTVLAVFFSVIHSSYCIGAA. N-linked (GlcNAc...) asparagine glycosylation is found at Asn-371, Asn-390, and Asn-423. The ABC transporter 1 domain maps to 386–622; the sequence is VEFKNVSFNY…RGLYYSLVMS (237 aa). ATP is bound at residue 421–428; that stretch reads GLNGSGKS. The next 2 membrane-spanning stretches (helical) occupy residues 693–713 and 737–757; these read VLGTLASVLNGTVHPVFSIIF and MIFVILGVICFVSYFMQGLFY. Positions 693–980 constitute an ABC transmembrane type-1 2 domain; that stretch reads VLGTLASVLN…TLVLAPEYSK (288 aa). 2 N-linked (GlcNAc...) asparagine glycosylation sites follow: Asn-789 and Asn-819. Residues 827-847 form a helical membrane-spanning segment; the sequence is VIISFIYGWEMTFLILSIAPV. Asn-910 is a glycosylation site (N-linked (GlcNAc...) asparagine). The next 2 membrane-spanning stretches (helical) occupy residues 917–937 and 954–974; these read IIGSCYAFSHAFIYFAYAAGF and MFIVFTAIAYGAMAIGETLVL. The region spanning 1015 to 1253 is the ABC transporter 2 domain; the sequence is LEFREVSFFY…RDIYFKLVNA (239 aa). Residue 1050 to 1057 coordinates ATP; that stretch reads GSSGCGKS. Asn-1104 and Asn-1188 each carry an N-linked (GlcNAc...) asparagine glycan.

It belongs to the ABC transporter superfamily. ABCB family. Multidrug resistance exporter (TC 3.A.1.201) subfamily. As to expression, expressed by CD133-expressing progenitor cells among epidermal melanocytes (at protein level). Widely expressed with specific expression in pigment cells. Highly expressed in several malignant tissues: highly expressed in clinical melanomas, with low expression in normal skin. In melanoma, marks malignant melanoma-initiating cells (MMIC), in which clinical virulence resides as a consequence of unlimited self-renewal capacity, resulting in inexorable tumor progression and metastasis. Also highly expressed in a number of leukemia cells. Expressed in basal limbal epithelium.

The protein resides in the cell membrane. The catalysed reaction is daunorubicin(in) + ATP + H2O = daunorubicin(out) + ADP + phosphate + H(+). Its function is as follows. Energy-dependent efflux transporter responsible for decreased drug accumulation in multidrug-resistant cells. Specifically present in limbal stem cells, where it plays a key role in corneal development and repair. The polypeptide is ATP-binding cassette sub-family B member 5 (Homo sapiens (Human)).